The following is a 283-amino-acid chain: Glutamate racemase (283 aa).

Residues 13 to 14 (DS) and 45 to 46 (YG) each bind substrate. Cys76 (proton donor/acceptor) is an active-site residue. 77–78 (NT) contributes to the substrate binding site. Cys186 acts as the Proton donor/acceptor in catalysis. Residue 187–188 (TH) participates in substrate binding.

It belongs to the aspartate/glutamate racemases family.

It catalyses the reaction L-glutamate = D-glutamate. The protein operates within cell wall biogenesis; peptidoglycan biosynthesis. Functionally, provides the (R)-glutamate required for cell wall biosynthesis. The chain is Glutamate racemase from Microcystis aeruginosa (strain NIES-843 / IAM M-2473).